A 741-amino-acid polypeptide reads, in one-letter code: Wall-associated receptor kinase 3 (741 aa).

A signal peptide spans 1 to 23; it reads MKFQEGVFLVVIFFLAYTQLVKG. Residues 24-342 are Extracellular-facing; the sequence is QHQPREDCKL…CTRPEYKRTR (319 aa). 12 N-linked (GlcNAc...) asparagine glycosylation sites follow: asparagine 37, asparagine 59, asparagine 78, asparagine 100, asparagine 103, asparagine 141, asparagine 192, asparagine 199, asparagine 232, asparagine 246, asparagine 261, and asparagine 266. Residues 245–292 enclose the EGF-like 1 domain; that stretch reads GNQTCEQAGSTRICGKNSSCYNSTTRNGYICKCNEGYDGNPYRSEGCK. Disulfide bonds link cysteine 249-cysteine 264, cysteine 258-cysteine 275, cysteine 277-cysteine 291, cysteine 297-cysteine 310, cysteine 304-cysteine 319, and cysteine 321-cysteine 333. Residues 293–334 enclose the EGF-like 2; calcium-binding domain; sequence DIDECISDTHNCSDPKTCRNRDGGFDCKCPSGYDLNSSMSCT. A glycan (N-linked (GlcNAc...) asparagine) is linked at asparagine 303. Asparagine 328 carries an N-linked (GlcNAc...) asparagine glycan. Residues 343–363 form a helical membrane-spanning segment; sequence IFLVIIIGVLVLLLAAICIQH. At 364–741 the chain is on the cytoplasmic side; the sequence is ATKQRKYTKL…VAILDIETGR (378 aa). Threonine 404 is subject to Phosphothreonine. Residues 415–698 enclose the Protein kinase domain; the sequence is YDESRILGQG…RVEKTKHKWS (284 aa). ATP contacts are provided by residues 421-429 and lysine 443; that span reads LGQGGQGTV. Tyrosine 488 carries the phosphotyrosine modification. The active-site Proton acceptor is the aspartate 540. Phosphothreonine is present on residues threonine 574 and threonine 579. Tyrosine 587 is modified (phosphotyrosine).

This sequence belongs to the protein kinase superfamily. Ser/Thr protein kinase family. As to expression, predominantly expressed in green tissues such as stems and leaves.

It is found in the membrane. It carries out the reaction L-seryl-[protein] + ATP = O-phospho-L-seryl-[protein] + ADP + H(+). The catalysed reaction is L-threonyl-[protein] + ATP = O-phospho-L-threonyl-[protein] + ADP + H(+). Its function is as follows. Serine/threonine-protein kinase that may function as a signaling receptor of extracellular matrix component. Binding to pectin may have significance in the control of cell expansion, morphogenesis and development. The sequence is that of Wall-associated receptor kinase 3 (WAK3) from Arabidopsis thaliana (Mouse-ear cress).